The primary structure comprises 292 residues: 2-(5''-triphosphoribosyl)-3'-dephosphocoenzyme-A synthase (292 aa).

It belongs to the CitG/MdcB family.

The enzyme catalyses 3'-dephospho-CoA + ATP = 2'-(5''-triphospho-alpha-D-ribosyl)-3'-dephospho-CoA + adenine. In terms of biological role, catalyzes the formation of 2-(5''-triphosphoribosyl)-3'-dephosphocoenzyme-A, the precursor of the prosthetic group of the holo-acyl carrier protein (gamma chain) of citrate lyase, from ATP and dephospho-CoA. The protein is 2-(5''-triphosphoribosyl)-3'-dephosphocoenzyme-A synthase of Escherichia coli O6:K15:H31 (strain 536 / UPEC).